The chain runs to 353 residues: Protein RecA (353 aa).

74 to 81 (GPESSGKT) provides a ligand contact to ATP.

Belongs to the RecA family.

The protein localises to the cytoplasm. Can catalyze the hydrolysis of ATP in the presence of single-stranded DNA, the ATP-dependent uptake of single-stranded DNA by duplex DNA, and the ATP-dependent hybridization of homologous single-stranded DNAs. It interacts with LexA causing its activation and leading to its autocatalytic cleavage. In Bordetella bronchiseptica (strain ATCC BAA-588 / NCTC 13252 / RB50) (Alcaligenes bronchisepticus), this protein is Protein RecA.